A 331-amino-acid polypeptide reads, in one-letter code: Probable cyclic nucleotide synthase IK1_05630 (331 aa).

Belongs to the CD-NTase family. D12 subfamily.

In terms of biological role, cyclic nucleotide synthase (second messenger synthase) of a CBASS antivirus system. CBASS (cyclic oligonucleotide-based antiphage signaling system) provides immunity against bacteriophage. The CD-NTase protein synthesizes cyclic nucleotides in response to infection; these serve as specific second messenger signals. The signals activate a diverse range of effectors, leading to bacterial cell death and thus abortive phage infection. A type I-B CBASS system. Its function is as follows. Probably a cyclic nucleotide synthase that makes second messenger nucleotide which activates a CBASS antiviral defense system. Protects B.subtilis against phage infection. When IK1_05630 and IK1_05631 are introduced in B.subtilis BEST7003 there is 1000-fold protection against phage SBSphiC. Both genes are required for protection. Activation leads to bacterial cell lysis and death, which occurs before the phage has finished its replication cycle, thus protecting non-infected bacteria by aborting the phage infection and preventing its propagation. The protein is Probable cyclic nucleotide synthase IK1_05630 of Bacillus cereus (strain VD146).